The primary structure comprises 424 residues: MVNTTALIRSPTFVAQFRVLKQVNRGLFSQTSYARTHARTSYTHTMAGTDRLQQTSQILSRSTSSEIRLERPFKVTVIGSGNWGTTIAKVVAENTQEYPQLFERRVDMWVFEEQIEGRKLTEIINEQHENVKYLPGITLPENLVANPSVAAAAADADVLVFNIPHQFLGRIVEQLKGHVKPGARAISCLKGFSVGKDGVQLLSTYIEEHLHIPCGALSGANLAPEVAKGNWSETTVAYTLPQDFRGTGKDVDHAVLKKLFHRPYFHVNVVDDVAGISVAGALKNVVALACGFVLGLGWGNNAAAAVQRVGLSEMIKFARMFFPESKVETFYQESAGVADLITTCAGGRNVRIGRAMAETGKSAQELEKELLNGQSSQGIYTTQEVHEWLQQCGKKDEFPLFEAVYKIVYEGVPMSKLPDMLEDA.

Residues 79–84 (GSGNWG), Phe111, and Phe167 contribute to the NAD(+) site. Lys190 serves as a coordination point for substrate. Residue Ala223 coordinates NAD(+). Lys283 acts as the Proton acceptor in catalysis. Residues Arg348 and Gln377 each contribute to the NAD(+) site. A substrate-binding site is contributed by 348–349 (RN).

This sequence belongs to the NAD-dependent glycerol-3-phosphate dehydrogenase family.

It catalyses the reaction sn-glycerol 3-phosphate + NAD(+) = dihydroxyacetone phosphate + NADH + H(+). The protein is Glycerol-3-phosphate dehydrogenase [NAD(+)] (GPD) of Eremothecium gossypii (strain ATCC 10895 / CBS 109.51 / FGSC 9923 / NRRL Y-1056) (Yeast).